Here is a 432-residue protein sequence, read N- to C-terminus: Fibroleukin (432 aa).

The first 19 residues, 1-19, serve as a signal peptide directing secretion; it reads MRLPGWLWLSSAVLAACRA. Asn24 carries N-linked (GlcNAc...) asparagine glycosylation. Positions 71–157 form a coiled coil; the sequence is GSMEEVLKEV…QGRLETLHLV (87 aa). The tract at residues 100–122 is disordered; it reads QADDHRDPGGNGGNGAETAEDSR. Asn172, Asn228, Asn256, and Asn329 each carry an N-linked (GlcNAc...) asparagine glycan. In terms of domain architecture, Fibrinogen C-terminal spans 197-429; that stretch reads PVQHLIYKDC…QAKMMIRPKN (233 aa). Cys206 and Cys235 are oxidised to a cystine. Cys364 and Cys377 are oxidised to a cystine.

In terms of assembly, homotetramer; disulfide-linked. In terms of tissue distribution, constitutively expressed in cytotoxic T-cells.

The protein localises to the secreted. Its function is as follows. Converts prothrombin to thrombin. The polypeptide is Fibroleukin (Fgl2) (Mus musculus (Mouse)).